A 156-amino-acid chain; its full sequence is Cyanate hydratase (156 aa).

Active-site residues include R96, E99, and S122.

This sequence belongs to the cyanase family.

It catalyses the reaction cyanate + hydrogencarbonate + 3 H(+) = NH4(+) + 2 CO2. Functionally, catalyzes the reaction of cyanate with bicarbonate to produce ammonia and carbon dioxide. This Serratia proteamaculans (strain 568) protein is Cyanate hydratase.